The sequence spans 582 residues: 15-cis-phytoene desaturase, chloroplastic/chromoplastic (582 aa).

The N-terminal 93 residues, 1 to 93 (MNLLGSISTG…ELENTINFLE (93 aa)), are a transit peptide targeting the chloroplast and chromoplast. FAD is bound by residues Ala-121, 140–141 (EA), Lys-148, 165–166 (HI), and Tyr-171. Arg-306 serves as a coordination point for substrate. Asp-537 lines the FAD pocket. Ala-545 contacts substrate. Met-547 lines the FAD pocket.

This sequence belongs to the carotenoid/retinoid oxidoreductase family. As to quaternary structure, homotetramer. It depends on FAD as a cofactor. Expressed in flower buds and lips. Lower expression in leaves and roots.

Its subcellular location is the plastid. It is found in the chloroplast. The protein localises to the chromoplast. It localises to the membrane. The catalysed reaction is 2 a plastoquinone + 15-cis-phytoene = 9,9',15-tri-cis-zeta-carotene + 2 a plastoquinol. It participates in carotenoid biosynthesis; lycopene biosynthesis. Its function is as follows. Converts phytoene into zeta-carotene via the intermediary of phytofluene by the symmetrical introduction of two double bonds at the C-11 and C-11' positions of phytoene with a concomitant isomerization of two neighboring double bonds at the C9 and C9' positions from trans to cis. The chain is 15-cis-phytoene desaturase, chloroplastic/chromoplastic (PDS) from Oncidium hybrid cultivar (Orchid).